We begin with the raw amino-acid sequence, 146 residues long: Large ribosomal subunit protein uL15 (146 aa).

A compositionally biased stretch (basic and acidic residues) spans 1–13 (MKLHELKAAEGSR). Residues 1 to 61 (MKLHELKAAE…GGQTPLFRRM (61 aa)) form a disordered region. Gly residues-rich tracts occupy residues 23-35 (TSSG…GRGQ) and 42-52 (SGGGVRLGFEG).

This sequence belongs to the universal ribosomal protein uL15 family. As to quaternary structure, part of the 50S ribosomal subunit.

Its function is as follows. Binds to the 23S rRNA. In Streptococcus uberis (strain ATCC BAA-854 / 0140J), this protein is Large ribosomal subunit protein uL15.